Consider the following 351-residue polypeptide: Porphobilinogen deaminase (351 aa).

Cys242 bears the S-(dipyrrolylmethanemethyl)cysteine mark.

Belongs to the HMBS family. As to quaternary structure, monomer. Dipyrromethane is required as a cofactor.

The enzyme catalyses 4 porphobilinogen + H2O = hydroxymethylbilane + 4 NH4(+). It functions in the pathway porphyrin-containing compound metabolism; protoporphyrin-IX biosynthesis; coproporphyrinogen-III from 5-aminolevulinate: step 2/4. Functionally, tetrapolymerization of the monopyrrole PBG into the hydroxymethylbilane pre-uroporphyrinogen in several discrete steps. This is Porphobilinogen deaminase from Rickettsia africae (strain ESF-5).